Consider the following 146-residue polypeptide: MNLSNLRAPKKANRNRKRVGRGMGSGHGKTSTRGHKGQRSRSGSRSMRGFEGGQMPLHRRLPKRGFTNIFRTEYTVLNLSRLAELNETELTIDAFIAKGLLDKRNGLLKILGNGELTTAITVHAHKFSKSAQEKIEKVGGKAILVA.

The disordered stretch occupies residues 1-58; that stretch reads MNLSNLRAPKKANRNRKRVGRGMGSGHGKTSTRGHKGQRSRSGSRSMRGFEGGQMPLH. Basic residues-rich tracts occupy residues 8 to 20 and 30 to 39; these read APKK…KRVG and TSTRGHKGQR. Positions 40–49 are enriched in low complexity; sequence SRSGSRSMRG.

This sequence belongs to the universal ribosomal protein uL15 family. As to quaternary structure, part of the 50S ribosomal subunit.

In terms of biological role, binds to the 23S rRNA. The protein is Large ribosomal subunit protein uL15 of Acidobacterium capsulatum (strain ATCC 51196 / DSM 11244 / BCRC 80197 / JCM 7670 / NBRC 15755 / NCIMB 13165 / 161).